A 583-amino-acid chain; its full sequence is Putative fatty-acid--CoA ligase fadD25 (583 aa).

Transmembrane regions (helical) follow at residues 77–97 (YVVS…LSIP), 109–129 (VFAD…DNVV), and 229–249 (FVLG…TSPI). The interval 353–375 (IVQFDPQKLPDGQAERTESDGGT) is disordered.

This sequence belongs to the ATP-dependent AMP-binding enzyme family.

Its subcellular location is the cell membrane. The polypeptide is Putative fatty-acid--CoA ligase fadD25 (fadD25) (Mycobacterium tuberculosis (strain CDC 1551 / Oshkosh)).